Reading from the N-terminus, the 220-residue chain is Uracil-DNA glycosylase (220 aa).

Catalysis depends on D60, which acts as the Proton acceptor.

Belongs to the uracil-DNA glycosylase (UDG) superfamily. UNG family.

It localises to the cytoplasm. The enzyme catalyses Hydrolyzes single-stranded DNA or mismatched double-stranded DNA and polynucleotides, releasing free uracil.. In terms of biological role, excises uracil residues from the DNA which can arise as a result of misincorporation of dUMP residues by DNA polymerase or due to deamination of cytosine. The protein is Uracil-DNA glycosylase of Francisella tularensis subsp. novicida (strain U112).